Consider the following 201-residue polypeptide: Adenylyl-sulfate kinase (201 aa).

An ATP-binding site is contributed by 35–42; it reads GLSGSGKS. Ser-109 functions as the Phosphoserine intermediate in the catalytic mechanism.

The protein belongs to the APS kinase family.

It carries out the reaction adenosine 5'-phosphosulfate + ATP = 3'-phosphoadenylyl sulfate + ADP + H(+). Its pathway is sulfur metabolism; hydrogen sulfide biosynthesis; sulfite from sulfate: step 2/3. Catalyzes the synthesis of activated sulfate. This is Adenylyl-sulfate kinase from Shigella boydii serotype 18 (strain CDC 3083-94 / BS512).